The following is a 221-amino-acid chain: Octanoyltransferase (221 aa).

A BPL/LPL catalytic domain is found at 35-221 (ESYENRIIFC…RELLAALLSK (187 aa)). Residues 80–87 (RGGDITYH), 152–154 (AIG), and 165–167 (GLA) contribute to the substrate site. C183 serves as the catalytic Acyl-thioester intermediate.

It belongs to the LipB family.

It is found in the cytoplasm. The catalysed reaction is octanoyl-[ACP] + L-lysyl-[protein] = N(6)-octanoyl-L-lysyl-[protein] + holo-[ACP] + H(+). It participates in protein modification; protein lipoylation via endogenous pathway; protein N(6)-(lipoyl)lysine from octanoyl-[acyl-carrier-protein]: step 1/2. Catalyzes the transfer of endogenously produced octanoic acid from octanoyl-acyl-carrier-protein onto the lipoyl domains of lipoate-dependent enzymes. Lipoyl-ACP can also act as a substrate although octanoyl-ACP is likely to be the physiological substrate. This chain is Octanoyltransferase, found in Bacteroides fragilis (strain ATCC 25285 / DSM 2151 / CCUG 4856 / JCM 11019 / LMG 10263 / NCTC 9343 / Onslow / VPI 2553 / EN-2).